Consider the following 47-residue polypeptide: Thionin (47 aa).

Intrachain disulfides connect C3-C41, C4-C33, C12-C31, and C16-C27.

Belongs to the plant thionin (TC 1.C.44) family. 4 C-C subfamily.

The protein resides in the secreted. Its function is as follows. Thionins are small plant proteins which are toxic to animal cells. They seem to exert their toxic effect at the level of the cell membrane. Their precise function is not known. The chain is Thionin (THI1) from Pyrularia pubera (Buffalo nut).